Consider the following 284-residue polypeptide: Proteasome subunit pbs-5 (284 aa).

The propeptide at 1 to 64 (MWGETFDDFE…AGKSMQFRKG (64 aa)) is removed in mature form. Threonine 65 acts as the Nucleophile in catalysis.

It belongs to the peptidase T1B family. In terms of assembly, the 26S proteasome consists of a 20S proteasome core and two 19S regulatory subunits. The 20S proteasome core is composed of 28 subunits that are arranged in four stacked rings, resulting in a barrel-shaped structure. The two end rings are each formed by seven alpha subunits, and the two central rings are each formed by seven beta subunits. The catalytic chamber with the active sites is on the inside of the barrel.

It localises to the cytoplasm. Its subcellular location is the nucleus. It carries out the reaction Cleavage of peptide bonds with very broad specificity.. Its function is as follows. Component of the 20S core proteasome complex involved in the proteolytic degradation of most intracellular proteins. This complex plays numerous essential roles within the cell by associating with different regulatory particles. Associated with two 19S regulatory particles, forms the 26S proteasome and thus participates in the ATP-dependent degradation of ubiquitinated proteins. The 26S proteasome plays a key role in the maintenance of protein homeostasis by removing misfolded or damaged proteins that could impair cellular functions, and by removing proteins whose functions are no longer required. This is Proteasome subunit pbs-5 from Caenorhabditis elegans.